Reading from the N-terminus, the 754-residue chain is 5-methyltetrahydropteroyltriglutamate--homocysteine methyltransferase (754 aa).

Residues 17–20 (RELK) and lysine 117 contribute to the 5-methyltetrahydropteroyltri-L-glutamate site. L-homocysteine-binding positions include 431-433 (IGS) and glutamate 484. L-methionine contacts are provided by residues 431-433 (IGS) and glutamate 484. Residues 515 to 516 (RC) and tryptophan 561 contribute to the 5-methyltetrahydropteroyltri-L-glutamate site. Aspartate 599 serves as a coordination point for L-homocysteine. Residue aspartate 599 coordinates L-methionine. Glutamate 605 provides a ligand contact to 5-methyltetrahydropteroyltri-L-glutamate. Zn(2+) is bound by residues histidine 641, cysteine 643, and glutamate 665. Catalysis depends on histidine 694, which acts as the Proton donor. Cysteine 726 lines the Zn(2+) pocket.

It belongs to the vitamin-B12 independent methionine synthase family. It depends on Zn(2+) as a cofactor.

The catalysed reaction is 5-methyltetrahydropteroyltri-L-glutamate + L-homocysteine = tetrahydropteroyltri-L-glutamate + L-methionine. Its pathway is amino-acid biosynthesis; L-methionine biosynthesis via de novo pathway; L-methionine from L-homocysteine (MetE route): step 1/1. Functionally, catalyzes the transfer of a methyl group from 5-methyltetrahydrofolate to homocysteine resulting in methionine formation. In Salmonella newport (strain SL254), this protein is 5-methyltetrahydropteroyltriglutamate--homocysteine methyltransferase.